We begin with the raw amino-acid sequence, 1438 residues long: Lysophospholipase NTE1 (1438 aa).

Residues 1–25 are Cytoplasmic-facing; sequence MDSDTSSADFHSTETLVSTPKYSYG. A helical membrane pass occupies residues 26–46; that stretch reads VLINVILLVSWTCFRVVNWFL. The Lumenal segment spans residues 47–64; that stretch reads VTLPSILLGMLSKTFQIT. The helical transmembrane segment at 65–85 threads the bilayer; the sequence is LSLSSILMFVVAVTAICFLVV. At 86–1438 the chain is on the cytoplasmic side; sequence RYKYLTRYSR…HVSLSRRNSI (1353 aa). Positions 432 to 450 are enriched in polar residues; sequence YETQTIPNESEDSPTIQRS. Residues 432–464 are disordered; that stretch reads YETQTIPNESEDSPTIQRSSLRRRASHSTSLRK. A nucleoside 3',5'-cyclic phosphate is bound by residues 590–720 and 707–856; these read GDDS…LTID and RLKR…VANR. One can recognise a PNPLA domain in the interval 1131-1295; the sequence is LVLGGGGSRG…LDNLPVSEMK (165 aa). The GXGXXG motif lies at 1135 to 1140; sequence GGGSRG. The GXSXG signature appears at 1162 to 1166; the sequence is GTSIG. S1164 acts as the Nucleophile in catalysis. The active-site Proton acceptor is D1282. The short motif at 1282-1284 is the DGA/G element; sequence DGG.

This sequence belongs to the NTE family.

Its subcellular location is the endoplasmic reticulum membrane. It carries out the reaction a 1-acyl-sn-glycero-3-phosphocholine + H2O = sn-glycerol 3-phosphocholine + a fatty acid + H(+). Its activity is regulated as follows. Inhibited by organophosphorus esters. Its function is as follows. Intracellular phospholipase B that catalyzes the double deacylation of phosphatidylcholine (PC) to glycerophosphocholine (GroPCho). Plays an important role in membrane lipid homeostasis. Responsible for the rapid PC turnover in response to inositol, elevated temperatures, or when choline is present in the growth medium. This chain is Lysophospholipase NTE1 (NTE1), found in Meyerozyma guilliermondii (strain ATCC 6260 / CBS 566 / DSM 6381 / JCM 1539 / NBRC 10279 / NRRL Y-324) (Yeast).